The chain runs to 448 residues: tRNA-2-methylthio-N(6)-dimethylallyladenosine synthase (448 aa).

Residues lysine 2–lysine 119 form the MTTase N-terminal domain. Positions 11, 48, 82, 156, 160, and 163 each coordinate [4Fe-4S] cluster. A Radical SAM core domain is found at arginine 142–glutamine 375. Residues glutamine 378–glutamate 444 enclose the TRAM domain.

The protein belongs to the methylthiotransferase family. MiaB subfamily. In terms of assembly, monomer. The cofactor is [4Fe-4S] cluster.

The protein resides in the cytoplasm. It catalyses the reaction N(6)-dimethylallyladenosine(37) in tRNA + (sulfur carrier)-SH + AH2 + 2 S-adenosyl-L-methionine = 2-methylsulfanyl-N(6)-dimethylallyladenosine(37) in tRNA + (sulfur carrier)-H + 5'-deoxyadenosine + L-methionine + A + S-adenosyl-L-homocysteine + 2 H(+). Catalyzes the methylthiolation of N6-(dimethylallyl)adenosine (i(6)A), leading to the formation of 2-methylthio-N6-(dimethylallyl)adenosine (ms(2)i(6)A) at position 37 in tRNAs that read codons beginning with uridine. The sequence is that of tRNA-2-methylthio-N(6)-dimethylallyladenosine synthase from Polynucleobacter asymbioticus (strain DSM 18221 / CIP 109841 / QLW-P1DMWA-1) (Polynucleobacter necessarius subsp. asymbioticus).